A 292-amino-acid polypeptide reads, in one-letter code: 33 kDa chaperonin (292 aa).

Disulfide bonds link Cys-238/Cys-240 and Cys-271/Cys-274.

This sequence belongs to the HSP33 family. Post-translationally, under oxidizing conditions two disulfide bonds are formed involving the reactive cysteines. Under reducing conditions zinc is bound to the reactive cysteines and the protein is inactive.

Its subcellular location is the cytoplasm. Its function is as follows. Redox regulated molecular chaperone. Protects both thermally unfolding and oxidatively damaged proteins from irreversible aggregation. Plays an important role in the bacterial defense system toward oxidative stress. The chain is 33 kDa chaperonin from Latilactobacillus sakei subsp. sakei (strain 23K) (Lactobacillus sakei subsp. sakei).